A 207-amino-acid polypeptide reads, in one-letter code: Large ribosomal subunit protein eL13 (207 aa).

Belongs to the eukaryotic ribosomal protein eL13 family. Component of the 60S large ribosomal subunit (LSU).

The protein localises to the cytoplasm. Component of the ribosome, a large ribonucleoprotein complex responsible for the synthesis of proteins in the cell. The small ribosomal subunit (SSU) binds messenger RNAs (mRNAs) and translates the encoded message by selecting cognate aminoacyl-transfer RNA (tRNA) molecules. The large subunit (LSU) contains the ribosomal catalytic site termed the peptidyl transferase center (PTC), which catalyzes the formation of peptide bonds, thereby polymerizing the amino acids delivered by tRNAs into a polypeptide chain. The nascent polypeptides leave the ribosome through a tunnel in the LSU and interact with protein factors that function in enzymatic processing, targeting, and the membrane insertion of nascent chains at the exit of the ribosomal tunnel. As part of the LSU, it is probably required for its formation and the maturation of rRNAs. In Caenorhabditis elegans, this protein is Large ribosomal subunit protein eL13 (rpl-13).